Reading from the N-terminus, the 359-residue chain is Protein Wnt-5b (359 aa).

A signal peptide spans 1-17 (MPSLLLLFTAALLSSWA). The cysteines at positions 83 and 94 are disulfide-linked. 2 N-linked (GlcNAc...) asparagine glycosylation sites follow: asparagine 93 and asparagine 99. 10 cysteine pairs are disulfide-bonded: cysteine 133-cysteine 141, cysteine 143-cysteine 161, cysteine 217-cysteine 231, cysteine 219-cysteine 226, cysteine 288-cysteine 319, cysteine 304-cysteine 314, cysteine 318-cysteine 358, cysteine 334-cysteine 349, cysteine 336-cysteine 346, and cysteine 341-cysteine 342. Serine 223 carries the O-palmitoleoyl serine; by PORCN lipid modification. 2 N-linked (GlcNAc...) asparagine glycosylation sites follow: asparagine 291 and asparagine 305.

This sequence belongs to the Wnt family. Interacts with PORCN. Post-translationally, palmitoleoylation is required for efficient binding to frizzled receptors. Depalmitoleoylation leads to Wnt signaling pathway inhibition.

The protein localises to the secreted. Its subcellular location is the extracellular space. It localises to the extracellular matrix. In terms of biological role, ligand for members of the frizzled family of seven transmembrane receptors. Probable developmental protein. May be a signaling molecule which affects the development of discrete regions of tissues. Is likely to signal over only few cell diameters. This Homo sapiens (Human) protein is Protein Wnt-5b (WNT5B).